A 28-amino-acid polypeptide reads, in one-letter code: Alkaline serine protease NJP (28 aa).

With respect to regulation, inhibited by PMSF. Not or very weakly inhibited by EDTA, EGTA, beta-mercaptoethanol, benzamidine, aprotinin, iodoacetic acid, pepstatin A and SBTI. Functionally, alkaline thrombin-like serine protease. Has fibrinolytic and fibrinogenolytic but not plasminogenolytic activity. Cleaves fibrinogen chains Aalpha, Bbeta and gamma chains in that order. Cleaves after Arg and Lys residues. In Hediste japonica (Polychaete worm), this protein is Alkaline serine protease NJP.